The following is a 359-amino-acid chain: Putative nucleotidyltransferase MAB21L1 (359 aa).

Residues 23–24 (RK) and 63–66 (YEGL) each bind a ribonucleoside 5'-triphosphate. Mg(2+)-binding residues include glutamate 73 and glutamate 75. A ribonucleoside 5'-triphosphate is bound by residues lysine 248 and 252–255 (SLLK).

The protein belongs to the mab-21 family. As to quaternary structure, monomer. Homodecamer; composed of 2 back to back homopentamers. The protein may exist as monomer in solution and oiligomerizes upon ligand binding.

It is found in the nucleus. Putative nucleotidyltransferase required for several aspects of embryonic development including normal development of the eye. It is unclear whether it displays nucleotidyltransferase activity in vivo. Binds single-stranded RNA (ssRNA). The sequence is that of Putative nucleotidyltransferase MAB21L1 (mab21l1) from Xenopus tropicalis (Western clawed frog).